A 273-amino-acid polypeptide reads, in one-letter code: MTTLQQPQATESHNTDVALSLQNVTISYGNFEAVKNVYCEIPRGKVTAFIGPSGCGKSTVLRSLNRMNDLIEGCSLKGSILFGGVDLYGPKIDPVEVRRRIGIVFQQPNPFPKSIYENIAFGARINGYTGDMDELVERSLRQAAVWDECKDKLNESGYSLSGGQQQRLCIARTIAIQPEVILMDEPCSALDPISTLKIEETMHELKKSFTIVIVTHNMQQAVRVSDMTAFYNAEAVEGGTGKVGYLVEFNDTDKIFNAPQQQATQDYVSGRFG.

An ABC transporter domain is found at 19–258 (LSLQNVTISY…FNDTDKIFNA (240 aa)). Residue 51-58 (GPSGCGKS) participates in ATP binding.

It belongs to the ABC transporter superfamily. Phosphate importer (TC 3.A.1.7) family. In terms of assembly, the complex is composed of two ATP-binding proteins (PstB), two transmembrane proteins (PstC and PstA) and a solute-binding protein (PstS).

It is found in the cell inner membrane. The enzyme catalyses phosphate(out) + ATP + H2O = ADP + 2 phosphate(in) + H(+). Functionally, part of the ABC transporter complex PstSACB involved in phosphate import. Responsible for energy coupling to the transport system. This chain is Phosphate import ATP-binding protein PstB, found in Synechococcus sp. (strain CC9605).